A 667-amino-acid polypeptide reads, in one-letter code: Mediator of RNA polymerase II transcription subunit 17 (667 aa).

A coiled-coil region spans residues 172–197; the sequence is KRRALQEAVQVLDMAQKQRQRASSNL.

It belongs to the Mediator complex subunit 17 family. Component of the Mediator complex.

The protein localises to the nucleus. Functionally, component of the Mediator complex, a coactivator involved in regulated gene transcription of nearly all RNA polymerase II-dependent genes. Mediator functions as a bridge to convey information from gene-specific regulatory proteins to the basal RNA polymerase II transcription machinery. Mediator is recruited to promoters by direct interactions with regulatory proteins and serves as a scaffold for the assembly of a functional preinitiation complex with RNA polymerase II and the general transcription factors. The protein is Mediator of RNA polymerase II transcription subunit 17 (mdt-17) of Caenorhabditis elegans.